The following is a 1792-amino-acid chain: MSCVHYKFSSKLNYDTVTFDGLHISLCDLKKQIMGREKLKAADCDLQITNAQTKEEYTDDNALIPKNSSVIVRRIPIGGVKSTSKTYVISRTEPAMATTKAIDDSSASISLAQLTKTANLAEANASEEDKIKAMMSQSGHEYDPINYMKKPLGPPPPSYTCFRCGKPGHYIKNCPTNGDKNFESGPRIKKSTGIPRSFMMEVKDPNMKGAMLTNTGKYAIPTIDAEAYAIGKKEKPPFLPEEPSSSSEEDDPIPDELLCLICKDIMTDAVVIPCCGNSYCDECIRTALLESDEHTCPTCHQNDVSPDALIANKFLRQAVNNFKNETGYTKRLRKQLPPPPPPIPPPRPLIQRNLQPLMRSPISRQQDPLMIPVTSSSTHPAPSISSLTSNQSSLAPPVSGNPSSAPAPVPDITATVSISVHSEKSDGPFRDSDNKILPAAALASEHSKGTSSIAITALMEEKGYQVPVLGTPSLLGQSLLHGQLIPTTGPVRINTARPGGGRPGWEHSNKLGYLVSPPQQIRRGERSCYRSINRGRHHSERSQRTQGPSLPATPVFVPVPPPPLYPPPPHTLPLPPGVPPPQFSPQFPPGQPPPAGYSVPPPGFPPAPANLSTPWVSSGVQTAHSNTIPTTQAPPLSREEFYREQRRLKEEEKKKSKLDEFTNDFAKELMEYKKIQKERRRSFSRSKSPYSGSSYSRSSYTYSKSRSGSTRSRSYSRSFSRSHSRSYSRSPPYPRRGRGKSRNYRSRSRSHGYHRSRSRSPPYRRYHSRSRSPQAFRGQSPNKRNVPQGETEREYFNRYREVPPPYDMKAYYGRSVDFRDPFEKERYREWERKYREWYEKYYKGYAAGAQPRPSANRENFSPERFLPLNIRNSPFTRGRREDYVGGQSHRSRNIGSNYPEKLSARDGHNQKDNTKSKEKESENAPGDGKGNKHKKHRKRRKGEESEGFLNPELLETSRKSREPTGVEENKTDSLFVLPSRDDATPVRDEPMDAESITFKSVSEKDKRERDKPKAKGDKTKRKNDGSAVSKKENIVKPAKGPQEKVDGERERSPRSEPPIKKAKEETPKTDNTKSSSSSQKDEKITGTPRKAHSKSAKEHQETKPVKEEKVKKDYSKDVKSEKLTTKEEKAKKPNEKNKPLDNKGEKRKRKTEEKGVDKDFESSSMKISKLEVTEIVKPSPKRKMEPDTEKMDRTPEKDKISLSAPAKKIKLNRETGKKIGSTENISNTKEPSEKLESTSSKVKQEKVKGKVRRKVTGTEGSSSTLVDYTSTSSTGGSPVRKSEEKTDTKRTVIKTMEEYNNDNTAPAEDVIIMIQVPQSKWDKDDFESEEEDVKSTQPISSVGKPASVIKNVSTKPSNIVKYPEKESEPSEKIQKFTKDVSHEIIQHEVKSSKNSASSEKGKTKDRDYSVLEKENPEKRKNSTQPEKESNLDRLNEQGNFKSLSQSSKEARTSDKHDSTRASSNKDFTPNRDKKTDYDTREYSSSKRRDEKNELTRRKDSPSRNKDSASGQKNKPREERDLPKKGTGDSKKSNSSPSRDRKPHDHKATYDTKRPNEETKSVDKNPCKDREKHVLEARNNKESSGNKLLYILNPPETQVEKEQITGQIDKSTVKPKPQLSHSSRLSSDLTRETDEAAFEPDYNESDSESNVSVKEEESSGNISKDLKDKIVEKAKESLDTAAVVQVGISRNQSHSSPSVSPSRSHSPSGSQTRSHSSSASSAESQDSKKKKKKKEKKKHKKHKKHKKHKKHAGTEVELEKSQKHKHKKKKSKKNKDKEKEKEKDDQKVKSVTV.

The DWNN domain maps to 4–76 (VHYKFSSKLN…NSSVIVRRIP (73 aa)). An N6-acetyllysine modification is found at K130. The CCHC-type zinc-finger motif lies at 159 to 176 (YTCFRCGKPGHYIKNCPT). S244, S245, S246, and S247 each carry phosphoserine. The RING-type; degenerate zinc finger occupies 259–300 (CLICKDIMTDAVVIPCCGNSYCDECIRTALLESDEHTCPTCH). The disordered stretch occupies residues 326–347 (TGYTKRLRKQLPPPPPPIPPPR). Pro residues predominate over residues 336-347 (LPPPPPPIPPPR). S360 is modified (phosphoserine). The segment at 371 to 410 (IPVTSSSTHPAPSISSLTSNQSSLAPPVSGNPSSAPAPVP) is disordered. Residues 374 to 393 (TSSSTHPAPSISSLTSNQSS) are compositionally biased toward low complexity. At S516 the chain carries Phosphoserine. Disordered stretches follow at residues 532-601 (INRG…SVPP), 621-640 (QTAH…SREE), and 645-799 (QRRL…FNRY). A (Microbial infection) Interaction with Ebolavirus VP30 region spans residues 549–571 (SLPATPVFVPVPPPPLYPPPPHT). Residues 557-601 (VPVPPPPLYPPPPHTLPLPPGVPPPQFSPQFPPGQPPPAGYSVPP) are compositionally biased toward pro residues. The PPxPxY motif lies at 560–565 (PPPPLY). Residues 621 to 634 (QTAHSNTIPTTQAP) show a composition bias toward polar residues. A compositionally biased stretch (basic and acidic residues) spans 645–675 (QRRLKEEEKKKSKLDEFTNDFAKELMEYKKI). Positions 685 to 719 (RSKSPYSGSSYSRSSYTYSKSRSGSTRSRSYSRSF) are enriched in low complexity. The segment covering 735–770 (RRGRGKSRNYRSRSRSHGYHRSRSRSPPYRRYHSRS) has biased composition (basic residues). S768, S770, S772, and S780 each carry phosphoserine. Residues 790-799 (ETEREYFNRY) are compositionally biased toward basic and acidic residues. Residues S815, S861, and S873 each carry the phosphoserine modification. Disordered stretches follow at residues 847 to 1290 (AGAQ…DTKR), 1321 to 1348 (WDKD…PASV), 1360 to 1665 (VKYP…SKDL), and 1682 to 1792 (VVQV…SVTV). Residues 902–922 (LSARDGHNQKDNTKSKEKESE) are compositionally biased toward basic and acidic residues. Residues 931–940 (NKHKKHRKRR) show a composition bias toward basic residues. 5 stretches are compositionally biased toward basic and acidic residues: residues 955–971 (ETSR…ENKT), 979–990 (SRDDATPVRDEP), 1001–1017 (VSEK…AKGD), 1041–1071 (PQEK…KTDN), and 1095–1161 (SAKE…KDFE). The residue at position 957 (S957) is a Phosphoserine. The interaction with RB1 stretch occupies residues 982–1139 (DATPVRDEPM…AKKPNEKNKP (158 aa)). T984 is subject to Phosphothreonine. Glycyl lysine isopeptide (Lys-Gly) (interchain with G-Cter in SUMO2) cross-links involve residues K1106 and K1169. A Phosphoserine modification is found at S1179. A compositionally biased stretch (basic and acidic residues) spans 1182 to 1200 (RKMEPDTEKMDRTPEKDKI). S1221 is modified (phosphoserine). Residues 1230-1248 (EPSEKLESTSSKVKQEKVK) show a composition bias toward basic and acidic residues. Positions 1258–1276 (TEGSSSTLVDYTSTSSTGG) are enriched in polar residues. T1271 is subject to Phosphothreonine. Phosphoserine is present on S1277. Residues 1280-1290 (RKSEEKTDTKR) show a composition bias toward basic and acidic residues. A phosphoserine mark is found at S1328, S1341, and S1347. Composition is skewed to basic and acidic residues over residues 1362 to 1391 (YPEK…EVKS) and 1399 to 1435 (EKGK…DRLN). An interaction with p53 region spans residues 1433 to 1544 (RLNEQGNFKS…SPSRDRKPHD (112 aa)). Polar residues predominate over residues 1436-1447 (EQGNFKSLSQSS). 3 stretches are compositionally biased toward basic and acidic residues: residues 1448-1459 (KEARTSDKHDST), 1468-1506 (TPNR…RNKD), and 1514-1580 (KPRE…RNNK). Phosphothreonine is present on T1468. A compositionally biased stretch (polar residues) spans 1618 to 1627 (LSHSSRLSSD). Residues 1634–1646 (EAAFEPDYNESDS) show a composition bias toward acidic residues. S1646, S1648, and S1651 each carry phosphoserine. The span at 1692–1723 (SHSSPSVSPSRSHSPSGSQTRSHSSSASSAES) shows a compositional bias: low complexity. The span at 1727-1750 (KKKKKKKEKKKHKKHKKHKKHKKH) shows a compositional bias: basic residues. A compositionally biased stretch (basic and acidic residues) spans 1751–1760 (AGTEVELEKS). Basic residues predominate over residues 1761 to 1773 (QKHKHKKKKSKKN). The segment covering 1774–1792 (KDKEKEKEKDDQKVKSVTV) has biased composition (basic and acidic residues).

In terms of assembly, interacts with p53/TP53 and RB1. Interacts also with MDM2 and YBX1. Interacts with NEK6. Interacts with ZBTB38. (Microbial infection) [Isoform 1]: Interacts with ebolavirus VP30. Phosphorylated by NEK6. In terms of tissue distribution, highly expressed in the placenta and testis. Expressed at lower levels in the brain, heart, kidney, liver and lung. Overexpressed in esophageal cancer.

The protein resides in the nucleus. It localises to the nucleolus. It is found in the chromosome. Its subcellular location is the cytoplasm. The protein localises to the cytoskeleton. The protein resides in the microtubule organizing center. It localises to the centrosome. The catalysed reaction is S-ubiquitinyl-[E2 ubiquitin-conjugating enzyme]-L-cysteine + [acceptor protein]-L-lysine = [E2 ubiquitin-conjugating enzyme]-L-cysteine + N(6)-ubiquitinyl-[acceptor protein]-L-lysine.. The protein operates within protein modification; protein ubiquitination. Functionally, E3 ubiquitin-protein ligase which promotes ubiquitination of YBX1, leading to its degradation by the proteasome. May play a role as a scaffold protein to promote the assembly of the p53/TP53-MDM2 complex, resulting in increase of MDM2-mediated ubiquitination and degradation of p53/TP53; may function as negative regulator of p53/TP53, leading to both apoptosis and cell growth. Regulates DNA-replication and the stability of chromosomal common fragile sites (CFSs) in a ZBTB38- and MCM10-dependent manner. Controls ZBTB38 protein stability and abundance via ubiquitination and proteasomal degradation, and ZBTB38 in turn negatively regulates the expression of MCM10 which plays an important role in DNA-replication. In terms of biological role, (Microbial infection) [Isoform 1]: Restricts ebolavirus replication probably by impairing the vp30-NP interaction, and thus viral transcription. The chain is E3 ubiquitin-protein ligase RBBP6 (RBBP6) from Homo sapiens (Human).